We begin with the raw amino-acid sequence, 57 residues long: U17-myrmicitoxin-Tb1a (57 aa).

The N-terminal stretch at 1–29 is a signal peptide; it reads MEKNRTNIFSVYLMITFLLISIFITMVMS. The propeptide occupies 30 to 33; the sequence is DGEA. A disulfide bridge connects residues Cys42 and Cys53. At Ala56 the chain carries Alanine amide.

In terms of processing, O-glycosylated. In terms of tissue distribution, expressed by the venom gland.

It localises to the secreted. In terms of biological role, serine protease inhibitor which exhibits antifibrinolytic, antielastolytic and antimicrobial activities. Displays antimicrobial activity against bacteria and fungi. Likely functions in the innate immune response to microbial infection and possibly in the venom, as an antifibrinolytic agent. The protein is U17-myrmicitoxin-Tb1a of Tetramorium bicarinatum (Tramp ant).